Here is a 101-residue protein sequence, read N- to C-terminus: Small ribosomal subunit protein uS14 (101 aa).

Belongs to the universal ribosomal protein uS14 family. Part of the 30S ribosomal subunit. Contacts proteins S3 and S10.

Binds 16S rRNA, required for the assembly of 30S particles and may also be responsible for determining the conformation of the 16S rRNA at the A site. The chain is Small ribosomal subunit protein uS14 from Aeromonas salmonicida (strain A449).